A 197-amino-acid polypeptide reads, in one-letter code: Isopentenyl-diphosphate Delta-isomerase (197 aa).

Histidine 41 and histidine 48 together coordinate Mn(2+). The 138-residue stretch at 46-183 folds into the Nudix hydrolase domain; the sequence is RLHRAFSVFL…AWFMTVLDAA (138 aa). Cysteine 83 is an active-site residue. Mg(2+) is bound at residue cysteine 83. Histidine 85 contributes to the Mn(2+) binding site. Glutamate 103 contacts Mg(2+). Positions 130 and 132 each coordinate Mn(2+). Glutamate 132 is a catalytic residue.

It belongs to the IPP isomerase type 1 family. Requires Mg(2+) as cofactor. Mn(2+) is required as a cofactor.

The protein localises to the cytoplasm. It carries out the reaction isopentenyl diphosphate = dimethylallyl diphosphate. It participates in isoprenoid biosynthesis; dimethylallyl diphosphate biosynthesis; dimethylallyl diphosphate from isopentenyl diphosphate: step 1/1. Catalyzes the 1,3-allylic rearrangement of the homoallylic substrate isopentenyl (IPP) to its highly electrophilic allylic isomer, dimethylallyl diphosphate (DMAPP). This chain is Isopentenyl-diphosphate Delta-isomerase, found in Streptomyces coelicolor (strain ATCC BAA-471 / A3(2) / M145).